A 400-amino-acid chain; its full sequence is MGAPLSTTRRGMGQNLSVPNPLGFFPDHQLDPLFRANSSSPDWDFNTNKDSWPMANKVGVGGYGPGFTPPHGGLLGWSPQAQGVLTTLPADPPPASTNRRSGRKPTPVSPPLRDTHPQAMQWNSTQFHQALLDPRVRALYFPAGGSSSGTQNPAPTIASLTSSIFSKTGGPAMNMDNITSGLLGPLLVLQAVCFLLTKILTIPQSLDSWWTSLNFLGGLPGCPGQNSQSPTSNHLPTSCPPTCPGYRWMCLRRFIIFLFILLLCLIFLLVLLDYQGMLPVCPLLPGSTTTSTGPCKTCTTLAQGTSMFPSCCCSKPSDGNCTCIPIPSSWALGKYLWEWASARFSWLSLLVQFVQWCVGLSPTVWLLVIWMIWYWGPNLCSILSPFIPLLPIFCYLWVSI.

Met-1 carries the post-translational modification N-acetylmethionine. Gly-2 is lipidated: N-myristoyl glycine; by host. Residues 2–119 (GAPLSTTRRG…PPLRDTHPQA (118 aa)) are pre-S1. The tract at residues 2 to 174 (GAPLSTTRRG…FSKTGGPAMN (173 aa)) is pre-S. At 2–181 (GAPLSTTRRG…AMNMDNITSG (180 aa)) the chain is on the virion surface; in external conformation side. Residues 2–253 (GAPLSTTRRG…PGYRWMCLRR (252 aa)) lie on the Intravirion; in internal conformation side of the membrane. Pro-4 carries an N-linked (GlcNAc...) asparagine glycan. Residues 84 to 117 (VLTTLPADPPPASTNRRSGRKPTPVSPPLRDTHP) form a disordered region. A pre-S2 region spans residues 120 to 174 (MQWNSTQFHQALLDPRVRALYFPAGGSSSGTQNPAPTIASLTSSIFSKTGGPAMN). Residues 182–202 (LLGPLLVLQAVCFLLTKILTI) traverse the membrane as a helical segment. Topologically, residues 203–253 (PQSLDSWWTSLNFLGGLPGCPGQNSQSPTSNHLPTSCPPTCPGYRWMCLRR) are intravirion; in external conformation. A helical membrane pass occupies residues 254–274 (FIIFLFILLLCLIFLLVLLDY). Over 275-348 (QGMLPVCPLL…WASARFSWLS (74 aa)) the chain is Virion surface. N-linked (GlcNAc...) asparagine; by host glycosylation occurs at Asn-320. The helical transmembrane segment at 349–369 (LLVQFVQWCVGLSPTVWLLVI) threads the bilayer. The Intravirion segment spans residues 370–375 (WMIWYW). The helical transmembrane segment at 376-398 (GPNLCSILSPFIPLLPIFCYLWV) threads the bilayer. At 399–400 (SI) the chain is on the virion surface side.

The protein belongs to the orthohepadnavirus major surface antigen family. In its internal form (Li-HBsAg), interacts with the capsid protein and with the isoform S. Interacts with host chaperone CANX. As to quaternary structure, associates with host chaperone CANX through its pre-S2 N glycan; this association may be essential for isoform M proper secretion. In terms of assembly, interacts with isoform L. Interacts with the antigens of satellite virus HDV (HDVAgs); this interaction is required for encapsidation of HDV genomic RNA. Isoform M is N-terminally acetylated by host at a ratio of 90%, and N-glycosylated by host at the pre-S2 region. Post-translationally, myristoylated.

The protein resides in the virion membrane. The large envelope protein exists in two topological conformations, one which is termed 'external' or Le-HBsAg and the other 'internal' or Li-HBsAg. In its external conformation the protein attaches the virus to cell receptors and thereby initiating infection. This interaction determines the species specificity and liver tropism. This attachment induces virion internalization predominantly through caveolin-mediated endocytosis. The large envelope protein also assures fusion between virion membrane and endosomal membrane. In its internal conformation the protein plays a role in virion morphogenesis and mediates the contact with the nucleocapsid like a matrix protein. Functionally, the middle envelope protein plays an important role in the budding of the virion. It is involved in the induction of budding in a nucleocapsid independent way. In this process the majority of envelope proteins bud to form subviral lipoprotein particles of 22 nm of diameter that do not contain a nucleocapsid. The sequence is that of Large envelope protein from Hepatitis B virus genotype F2 (isolate Brazil/w4B) (HBV-F).